The primary structure comprises 184 residues: Ras-related protein O-Krev (184 aa).

10–17 (GSGGVGKS) is a GTP binding site. The Effector region signature appears at 32–40 (YDPTIEDSY). Residues 57 to 61 (DTAGT) and 116 to 119 (NKCD) each bind GTP. Cysteine methyl ester is present on Cys181. Residue Cys181 is the site of S-geranylgeranyl cysteine attachment. Residues 182-184 (TLL) constitute a propeptide, removed in mature form.

This sequence belongs to the small GTPase superfamily. Ras family.

The protein localises to the cell membrane. The catalysed reaction is GTP + H2O = GDP + phosphate + H(+). This Diplobatis ommata (Ocellated electric ray) protein is Ras-related protein O-Krev.